Consider the following 424-residue polypeptide: Spermatogenesis-associated protein 2-like protein (424 aa).

2 disordered regions span residues 233–258 (EDEG…AELA) and 273–300 (TGGR…EEGL). Phosphoserine is present on Ser327.

It belongs to the SPATA2 family.

The protein is Spermatogenesis-associated protein 2-like protein of Homo sapiens (Human).